Here is a 55-residue protein sequence, read N- to C-terminus: Large ribosomal subunit protein bL33 (55 aa).

Basic and acidic residues predominate over residues 1–11 (MAKGGREKIKL). The interval 1 to 29 (MAKGGREKIKLESTAGTGHFYTTTKNKKT) is disordered. Residues 14–24 (TAGTGHFYTTT) are compositionally biased toward polar residues.

The protein belongs to the bacterial ribosomal protein bL33 family.

This Thiobacillus denitrificans (strain ATCC 25259 / T1) protein is Large ribosomal subunit protein bL33.